Consider the following 236-residue polypeptide: Ubiquinone biosynthesis O-methyltransferase (236 aa).

S-adenosyl-L-methionine-binding residues include R36, G56, D77, and M125.

The protein belongs to the methyltransferase superfamily. UbiG/COQ3 family.

The catalysed reaction is a 3-demethylubiquinol + S-adenosyl-L-methionine = a ubiquinol + S-adenosyl-L-homocysteine + H(+). It catalyses the reaction a 3-(all-trans-polyprenyl)benzene-1,2-diol + S-adenosyl-L-methionine = a 2-methoxy-6-(all-trans-polyprenyl)phenol + S-adenosyl-L-homocysteine + H(+). The protein operates within cofactor biosynthesis; ubiquinone biosynthesis. In terms of biological role, O-methyltransferase that catalyzes the 2 O-methylation steps in the ubiquinone biosynthetic pathway. The sequence is that of Ubiquinone biosynthesis O-methyltransferase from Haemophilus ducreyi (strain 35000HP / ATCC 700724).